Consider the following 590-residue polypeptide: Aspartate--tRNA(Asp/Asn) ligase (590 aa).

An L-aspartate-binding site is contributed by Glu175. Positions 199–202 (QQYK) are aspartate. Residues Arg221 and His450 each coordinate L-aspartate. 221–223 (RDE) contacts ATP. Residue Glu484 participates in ATP binding. Arg491 contributes to the L-aspartate binding site. 536-539 (GVDR) serves as a coordination point for ATP.

The protein belongs to the class-II aminoacyl-tRNA synthetase family. Type 1 subfamily. Homodimer.

It localises to the cytoplasm. The enzyme catalyses tRNA(Asx) + L-aspartate + ATP = L-aspartyl-tRNA(Asx) + AMP + diphosphate. Functionally, aspartyl-tRNA synthetase with relaxed tRNA specificity since it is able to aspartylate not only its cognate tRNA(Asp) but also tRNA(Asn). Reaction proceeds in two steps: L-aspartate is first activated by ATP to form Asp-AMP and then transferred to the acceptor end of tRNA(Asp/Asn). This Bradyrhizobium sp. (strain BTAi1 / ATCC BAA-1182) protein is Aspartate--tRNA(Asp/Asn) ligase.